Here is a 147-residue protein sequence, read N- to C-terminus: Large ribosomal subunit protein bL9 (147 aa).

Belongs to the bacterial ribosomal protein bL9 family.

Its function is as follows. Binds to the 23S rRNA. The protein is Large ribosomal subunit protein bL9 of Bacteroides thetaiotaomicron (strain ATCC 29148 / DSM 2079 / JCM 5827 / CCUG 10774 / NCTC 10582 / VPI-5482 / E50).